The following is a 457-amino-acid chain: NADH-quinone oxidoreductase subunit D (457 aa).

Positions 1–23 (MSTHTETPVDGSAETITGAQPYE) are disordered.

It belongs to the complex I 49 kDa subunit family. NDH-1 is composed of 14 different subunits. Subunits NuoB, C, D, E, F, and G constitute the peripheral sector of the complex.

The protein localises to the cell membrane. The enzyme catalyses a quinone + NADH + 5 H(+)(in) = a quinol + NAD(+) + 4 H(+)(out). In terms of biological role, NDH-1 shuttles electrons from NADH, via FMN and iron-sulfur (Fe-S) centers, to quinones in the respiratory chain. The immediate electron acceptor for the enzyme in this species is believed to be a menaquinone. Couples the redox reaction to proton translocation (for every two electrons transferred, four hydrogen ions are translocated across the cytoplasmic membrane), and thus conserves the redox energy in a proton gradient. The protein is NADH-quinone oxidoreductase subunit D of Parafrankia sp. (strain EAN1pec).